The following is a 391-amino-acid chain: Glycerol-3-phosphate dehydrogenase [NAD(+)] 1 (391 aa).

NAD(+) is bound by residues 41-46, Phe-129, Lys-152, and Ala-185; that span reads GSGNWG. A substrate-binding site is contributed by Lys-152. Lys-245 functions as the Proton acceptor in the catalytic mechanism. NAD(+) contacts are provided by Arg-310 and Gln-339. 310–311 serves as a coordination point for substrate; that stretch reads RN.

The protein belongs to the NAD-dependent glycerol-3-phosphate dehydrogenase family.

The protein resides in the cytoplasm. It catalyses the reaction sn-glycerol 3-phosphate + NAD(+) = dihydroxyacetone phosphate + NADH + H(+). This is Glycerol-3-phosphate dehydrogenase [NAD(+)] 1 (GPD1) from Saccharomyces uvarum (Yeast).